A 383-amino-acid polypeptide reads, in one-letter code: Histidinol-phosphate aminotransferase (383 aa).

Residue Lys-240 is modified to N6-(pyridoxal phosphate)lysine.

This sequence belongs to the class-II pyridoxal-phosphate-dependent aminotransferase family. Histidinol-phosphate aminotransferase subfamily. Homodimer. Pyridoxal 5'-phosphate is required as a cofactor.

The catalysed reaction is L-histidinol phosphate + 2-oxoglutarate = 3-(imidazol-4-yl)-2-oxopropyl phosphate + L-glutamate. The protein operates within amino-acid biosynthesis; L-histidine biosynthesis; L-histidine from 5-phospho-alpha-D-ribose 1-diphosphate: step 7/9. This is Histidinol-phosphate aminotransferase from Oleidesulfovibrio alaskensis (strain ATCC BAA-1058 / DSM 17464 / G20) (Desulfovibrio alaskensis).